The sequence spans 337 residues: Transaldolase (337 aa).

Positions M1–R10 match the Nuclear localization signal motif. K142 serves as the catalytic Schiff-base intermediate with substrate. K219 is modified (N6-acetyllysine). A phosphoserine mark is found at S237 and S256. K269, K286, and K321 each carry N6-acetyllysine.

Belongs to the transaldolase family. Type 1 subfamily. In terms of assembly, homodimer. Interacts with KPNA1 and KPNA4.

Its subcellular location is the nucleus. The protein localises to the cytoplasm. The enzyme catalyses D-sedoheptulose 7-phosphate + D-glyceraldehyde 3-phosphate = D-erythrose 4-phosphate + beta-D-fructose 6-phosphate. Its pathway is carbohydrate degradation; pentose phosphate pathway; D-glyceraldehyde 3-phosphate and beta-D-fructose 6-phosphate from D-ribose 5-phosphate and D-xylulose 5-phosphate (non-oxidative stage): step 2/3. In terms of biological role, catalyzes the rate-limiting step of the non-oxidative phase in the pentose phosphate pathway. Catalyzes the reversible conversion of sedheptulose-7-phosphate and D-glyceraldehyde 3-phosphate into erythrose-4-phosphate and beta-D-fructose 6-phosphate. The polypeptide is Transaldolase (TALDO1) (Sus scrofa (Pig)).